The sequence spans 704 residues: 1,4-alpha-glucan-branching enzyme (704 aa).

(1,4-alpha-D-glucosyl)n-binding residues include tryptophan 94 and lysine 131. Serine 190 is subject to Phosphoserine. Aspartate 356 functions as the Nucleophile in the catalytic mechanism. The Proton donor role is filled by glutamate 417.

It belongs to the glycosyl hydrolase 13 family. GlgB subfamily.

Its subcellular location is the cytoplasm. The catalysed reaction is Transfers a segment of a (1-&gt;4)-alpha-D-glucan chain to a primary hydroxy group in a similar glucan chain.. Its pathway is glycan biosynthesis; glycogen biosynthesis. Functionally, glycogen-branching enzyme participates in the glycogen biosynthetic process along with glycogenin and glycogen synthase. Generates alpha-1,6-glucosidic branches from alpha-1,4-linked glucose chains, to increase solubility of the glycogen polymer. This is 1,4-alpha-glucan-branching enzyme (GLC3) from Saccharomyces cerevisiae (strain ATCC 204508 / S288c) (Baker's yeast).